The sequence spans 412 residues: Isocitrate dehydrogenase [NADP] (412 aa).

T100 contacts NADP(+). Residues S109, N111, R115, R125, and R149 each coordinate D-threo-isocitrate. D301 provides a ligand contact to Mg(2+). Residues 333-339 (HGSAPKY), N346, Y385, and R389 each bind NADP(+).

This sequence belongs to the isocitrate and isopropylmalate dehydrogenases family. In terms of assembly, homodimer. The cofactor is Mg(2+). Mn(2+) is required as a cofactor.

The enzyme catalyses D-threo-isocitrate + NADP(+) = 2-oxoglutarate + CO2 + NADPH. Catalyzes the oxidative decarboxylation of isocitrate to 2-oxoglutarate and carbon dioxide with the concomitant reduction of NADP(+). NAD(+) can replace NADP(+) with low efficiency. In Archaeoglobus fulgidus (strain ATCC 49558 / DSM 4304 / JCM 9628 / NBRC 100126 / VC-16), this protein is Isocitrate dehydrogenase [NADP].